Reading from the N-terminus, the 530-residue chain is N-acetylmuramoyl-L-alanine amidase (530 aa).

The signal sequence occupies residues methionine 1–alanine 22. N-linked (GlcNAc...) asparagine glycosylation is found at asparagine 61, asparagine 80, and asparagine 174. At serine 219 the chain carries Phosphoserine. Asparagine 335 carries an N-linked (GlcNAc...) asparagine glycan. Residues phenylalanine 386–glycine 512 form the N-acetylmuramoyl-L-alanine amidase domain. Histidine 390 is a binding site for Zn(2+). An intrachain disulfide couples cysteine 399 to cysteine 405. N-linked (GlcNAc...) asparagine glycosylation occurs at asparagine 465. Residues histidine 502 and cysteine 510 each contribute to the Zn(2+) site.

Belongs to the N-acetylmuramoyl-L-alanine amidase 2 family. It depends on Zn(2+) as a cofactor. Strongly expressed in liver and fetal liver.

It is found in the secreted. It localises to the membrane. The catalysed reaction is Hydrolyzes the link between N-acetylmuramoyl residues and L-amino acid residues in certain cell-wall glycopeptides.. In terms of biological role, may play a scavenger role by digesting biologically active peptidoglycan (PGN) into biologically inactive fragments. Has no direct bacteriolytic activity. In Mus musculus (Mouse), this protein is N-acetylmuramoyl-L-alanine amidase (Pglyrp2).